The sequence spans 141 residues: Large ribosomal subunit protein uL11 (141 aa).

It belongs to the universal ribosomal protein uL11 family. As to quaternary structure, part of the ribosomal stalk of the 50S ribosomal subunit. Interacts with L10 and the large rRNA to form the base of the stalk. L10 forms an elongated spine to which L12 dimers bind in a sequential fashion forming a multimeric L10(L12)X complex. One or more lysine residues are methylated.

Its function is as follows. Forms part of the ribosomal stalk which helps the ribosome interact with GTP-bound translation factors. This Synechococcus sp. (strain JA-3-3Ab) (Cyanobacteria bacterium Yellowstone A-Prime) protein is Large ribosomal subunit protein uL11.